The chain runs to 425 residues: Acyl-lipid (8-3)-desaturase (425 aa).

Residues 1–25 (MPPRDSYSYAAPPSAQLHEVDTPQE) are disordered. The Cytochrome b5 heme-binding domain maps to 18 to 93 (HEVDTPQEHD…SRPVHKGYSP (76 aa)). The heme site is built by H47 and H69. The chain crosses the membrane as a helical span at residues 134 to 154 (VAGAALIWHGYTFAGIAMLGV). Residues 164-168 (HEGGH) carry the Histidine box-1 motif. The chain crosses the membrane as a helical span at residues 175-197 (IAFDRAIQVACYGLGCGMSGAWW). The short motif at 201–206 (HNKHHA) is the Histidine box-2 element. 2 helical membrane-spanning segments follow: residues 241 to 261 (WLSMQAKLFAPVTTLLVALGW) and 297 to 317 (GAGYVLACYLLYVQLGAMYIF). The Histidine box-3 motif lies at 365–369 (QIEHH).

The protein belongs to the fatty acid desaturase type 1 family. Fe(2+) serves as cofactor.

The protein localises to the membrane. It carries out the reaction an (8Z,11Z,14Z)-icosatrienoyl-containing glycerolipid + 2 Fe(II)-[cytochrome b5] + O2 + 2 H(+) = (5Z,8Z,11Z,14Z)-eicosatetraenoyl-containing glycerolipid + 2 Fe(III)-[cytochrome b5] + 2 H2O. It catalyses the reaction an (8Z,11Z,14Z,17Z)-eicosatetraenoyl-containing glycerolipid + 2 Fe(II)-[cytochrome b5] + O2 + 2 H(+) = a (5Z,8Z,11Z,14Z,17Z)-eicosapentaenoyl-containing glycerolipid + 2 Fe(III)-[cytochrome b5] + 2 H2O. In terms of biological role, fatty acid desaturase that introduces a cis double bond at the 5-position in 20-carbon polyunsaturated fatty acids incorporated in a glycerolipid that contain a Delta(8) double bond. This is Acyl-lipid (8-3)-desaturase from Rebecca salina (Marine microalga).